Here is a 152-residue protein sequence, read N- to C-terminus: Probable histone H2A.3 (152 aa).

Disordered regions lie at residues 1 to 25 and 129 to 152; these read MDAS…KKSV and KTER…PKKA. Residues 7-25 show a composition bias toward basic residues; sequence TTKKGAGGRKGGGPRKKSV. A compositionally biased stretch (basic and acidic residues) spans 129 to 142; sequence KTERANTGGKEPKT. The SPKK motif motif lies at 148–151; that stretch reads SPKK.

This sequence belongs to the histone H2A family. The nucleosome is a histone octamer containing two molecules each of H2A, H2B, H3 and H4 assembled in one H3-H4 heterotetramer and two H2A-H2B heterodimers. The octamer wraps approximately 147 bp of DNA.

The protein resides in the nucleus. Its subcellular location is the chromosome. Its function is as follows. Core component of nucleosome. Nucleosomes wrap and compact DNA into chromatin, limiting DNA accessibility to the cellular machineries which require DNA as a template. Histones thereby play a central role in transcription regulation, DNA repair, DNA replication and chromosomal stability. DNA accessibility is regulated via a complex set of post-translational modifications of histones, also called histone code, and nucleosome remodeling. The protein is Probable histone H2A.3 of Medicago truncatula (Barrel medic).